Here is a 142-residue protein sequence, read N- to C-terminus: Small heat shock protein IbpB (142 aa).

A sHSP domain is found at 26 to 137 (SGESQSFPPY…APQRIAINER (112 aa)).

The protein belongs to the small heat shock protein (HSP20) family. In terms of assembly, homodimer. Forms homomultimers of about 100-150 subunits at optimal growth temperatures. Conformation changes to oligomers at high temperatures or high ionic concentrations. The decrease in size of the multimers is accompanied by an increase in chaperone activity.

It localises to the cytoplasm. In terms of biological role, associates with aggregated proteins, together with IbpA, to stabilize and protect them from irreversible denaturation and extensive proteolysis during heat shock and oxidative stress. Aggregated proteins bound to the IbpAB complex are more efficiently refolded and reactivated by the ATP-dependent chaperone systems ClpB and DnaK/DnaJ/GrpE. Its activity is ATP-independent. The protein is Small heat shock protein IbpB of Salmonella newport (strain SL254).